The following is a 647-amino-acid chain: Acetyl-coenzyme A synthetase (647 aa).

CoA-binding positions include 189–192, Thr307, and Asn331; that span reads RGGK. Residues 383–385, 407–412, Asp496, and Arg511 each bind ATP; these read GEP and DTWWQT. Ser519 provides a ligand contact to CoA. Arg522 contacts ATP. Positions 535 and 538 each coordinate Mg(2+). Arg580 is a CoA binding site. Residue Lys605 is modified to N6-acetyllysine.

Belongs to the ATP-dependent AMP-binding enzyme family. The cofactor is Mg(2+). Post-translationally, acetylated. Deacetylation by the SIR2-homolog deacetylase activates the enzyme.

It catalyses the reaction acetate + ATP + CoA = acetyl-CoA + AMP + diphosphate. Catalyzes the conversion of acetate into acetyl-CoA (AcCoA), an essential intermediate at the junction of anabolic and catabolic pathways. AcsA undergoes a two-step reaction. In the first half reaction, AcsA combines acetate with ATP to form acetyl-adenylate (AcAMP) intermediate. In the second half reaction, it can then transfer the acetyl group from AcAMP to the sulfhydryl group of CoA, forming the product AcCoA. This chain is Acetyl-coenzyme A synthetase, found in Syntrophus aciditrophicus (strain SB).